The following is a 645-amino-acid chain: Zinc finger protein 64 (645 aa).

C2H2-type zinc fingers lie at residues 175–197 (HKCE…MRCH), 203–225 (YKCK…LRIH), and 231–253 (FKCQ…LRSH). Residue E286 forms a Glycyl lysine isopeptide (Lys-Gly) (interchain with G-Cter in SUMO2) linkage. A C2H2-type 4; atypical zinc finger spans residues 299 to 324 (FNCCYPGCHFKTVHGMKDLDRHLRIH). C2H2-type zinc fingers lie at residues 330 to 352 (HKCE…MRCH), 358 to 380 (HKCH…LRIH), 386 to 408 (YKCQ…LRSH), 414 to 436 (FQCW…MIVH), 442 to 465 (FKCE…RIKH), 467 to 489 (FKCL…SRLH), 495 to 517 (EKCP…SRVH), 523 to 546 (FKCD…DKVH), and 580 to 602 (FRCE…KKQH). Residue N397 forms a Glycyl lysine isopeptide (Lys-Gly) (interchain with G-Cter in SUMO2) linkage. Basic and acidic residues-rich tracts occupy residues 543–554 (DKVHRDEAKTEN) and 600–610 (KQHSDQSENKN). Disordered regions lie at residues 543–567 (DKVH…REGS) and 600–645 (KQHS…SQDL). V545 bears the Phosphoserine mark. Positions 622–631 (ASGQLSTLVS) are enriched in polar residues.

The protein belongs to the krueppel C2H2-type zinc-finger protein family. Interacts with ZNF70; this interaction promote the transactivation of the HES1 gene. Interacts with NOTCH1.

It localises to the nucleus. Functionally, may be involved in the regulation of mesenchymal cell differentiation through transactivation of NOTCH1 target genes. The chain is Zinc finger protein 64 from Homo sapiens (Human).